Consider the following 551-residue polypeptide: Pyrroline-5-carboxylate reductase 1 (551 aa).

Residues 279–551 (LYTQKQQNKK…RHEVKTEQIN (273 aa)) are disordered. 7 stretches are compositionally biased toward low complexity: residues 282–298 (QKQQNKKQQQLKQQQHQ), 306–342 (QQHQQQVQQQEPHQYQQQQQQSHQQSQYNQGHNYGHQ), 383–415 (QQYQQHQQPTQQESQEQTQQPEQTQSTNQSNQR), 424–441 (KSPQKQPQKQSQVQQPSS), 448–475 (QQQQQQPPQEQQQQQEQPQQPQEQQQQP), 487–496 (QQQQPQQQQQ), and 503–520 (YNNNRRGGRHYSYNNNYN). Residues 537-551 (YHDEKRHEVKTEQIN) show a composition bias toward basic and acidic residues.

The protein belongs to the pyrroline-5-carboxylate reductase family. As to quaternary structure, homodecamer; composed of 5 homodimers.

It catalyses the reaction L-proline + NADP(+) = (S)-1-pyrroline-5-carboxylate + NADPH + 2 H(+). It carries out the reaction L-proline + NAD(+) = (S)-1-pyrroline-5-carboxylate + NADH + 2 H(+). The protein operates within amino-acid biosynthesis; L-proline biosynthesis; L-proline from L-glutamate 5-semialdehyde: step 1/1. This Dictyostelium discoideum (Social amoeba) protein is Pyrroline-5-carboxylate reductase 1 (pycr1).